Consider the following 22-residue polypeptide: 65 kDa membrane protein (22 aa).

The disordered stretch occupies residues 1-22 (AAKPLDKSSSSLHHGYSKVHVP).

It localises to the cell membrane. In terms of biological role, binds various plasma and ECM-proteins. The polypeptide is 65 kDa membrane protein (Staphylococcus aureus).